The primary structure comprises 1230 residues: Cullin-associated NEDD8-dissociated protein 1 (1230 aa).

Alanine 2 bears the N-acetylalanine mark. HEAT repeat units lie at residues 2–39, 44–81, 83–119, 131–165, 171–208, 210–247, 248–282, 289–366, 370–407, 424–467, 471–510, and 515–552; these read ASAS…KDSI, DSER…KVKE, QVET…ELPP, CKKI…LSRQ, NFHP…SCGN, VFVD…QAGH, RIGE…FESF, EVYP…TRHE, EFYK…QTRP, PLTM…VLPG, QHIP…NHSP, and PHVQ…VIRP. Positions 315-344 are disordered; the sequence is DEDEDENAMDADGGDDDDQGSDDEYSDDDD. Position 335 is a phosphoserine (serine 335). Serine 558 bears the Phosphoserine mark. HEAT repeat units follow at residues 563 to 602, 606 to 643, 646 to 683, 688 to 725, 729 to 768, 770 to 808, 809 to 845, 852 to 889, 890 to 927, 928 to 960, 961 to 998, 1002 to 1039, 1043 to 1097, 1099 to 1133, and 1140 to 1189; these read PYIK…NLGD, PDLS…LKID, PVLG…NYSD, AMID…VYPS, KISG…TGTN, LGYM…ALTR, ACPK…LGEV, SGQL…GNLP, EYLP…GLKP, YVEN…KLTL, IDPE…DHPQ, PLLK…NKPS, DLLD…DSCL, RLDI…LSTL, and QRLD…IPEA. Residue lysine 971 is modified to N6-acetyllysine.

Belongs to the CAND family. In terms of assembly, interacts with TBP. Part of a complex that contains CUL1 and RBX1. Interacts with unneddylated cullins: interacts with CUL1, CUL2, CUL3, CUL4A, CUL4B and CUL5. Does not bind neddylated CUL1. Interaction with cullins is abolished in presence of COMMD1, which antagonizes with CAND1 for interacting with cullins. Interacts with ERCC6. Interacts with DCUN1D1, DCUN1D2, DCUN1D3, DCUN1D4 and DCUN1D5; these interactions are bridged by cullins and strongly inhibits the neddylation of cullins.

The protein localises to the cytoplasm. The protein resides in the nucleus. Key assembly factor of SCF (SKP1-CUL1-F-box protein) E3 ubiquitin ligase complexes that promotes the exchange of the substrate-recognition F-box subunit in SCF complexes, thereby playing a key role in the cellular repertoire of SCF complexes. Acts as a F-box protein exchange factor. The exchange activity of CAND1 is coupled with cycles of neddylation conjugation: in the deneddylated state, cullin-binding CAND1 binds CUL1-RBX1, increasing dissociation of the SCF complex and promoting exchange of the F-box protein. Probably plays a similar role in other cullin-RING E3 ubiquitin ligase complexes. This is Cullin-associated NEDD8-dissociated protein 1 (Cand1) from Mus musculus (Mouse).